The following is a 301-amino-acid chain: 2-methoxy-6-polyprenyl-1,4-benzoquinol methylase, mitochondrial (301 aa).

Residues 1 to 16 constitute a mitochondrion transit peptide; sequence MQTTRSTRLLSLARRF. The segment covering 20–31 has biased composition (polar residues); the sequence is RTASQSAQNSKG. The disordered stretch occupies residues 20–44; that stretch reads RTASQSAQNSKGMASGAESISGKEK. S-adenosyl-L-methionine is bound by residues Thr-111, Asp-139, and 173–174; that span reads DA.

The protein belongs to the class I-like SAM-binding methyltransferase superfamily. MenG/UbiE family. In terms of assembly, component of a multi-subunit COQ enzyme complex.

It localises to the mitochondrion inner membrane. The catalysed reaction is a 2-methoxy-6-(all-trans-polyprenyl)benzene-1,4-diol + S-adenosyl-L-methionine = a 5-methoxy-2-methyl-3-(all-trans-polyprenyl)benzene-1,4-diol + S-adenosyl-L-homocysteine + H(+). Its pathway is cofactor biosynthesis; ubiquinone biosynthesis. Functionally, methyltransferase required for the conversion of 2-polyprenyl-6-methoxy-1,4-benzoquinol (DDMQH2) to 2-polyprenyl-3-methyl-6-methoxy-1,4-benzoquinol (DMQH2). The protein is 2-methoxy-6-polyprenyl-1,4-benzoquinol methylase, mitochondrial of Drosophila melanogaster (Fruit fly).